The following is a 180-amino-acid chain: Large ribosomal subunit protein uL5 (180 aa).

It belongs to the universal ribosomal protein uL5 family. In terms of assembly, part of the 50S ribosomal subunit; part of the 5S rRNA/L5/L18/L25 subcomplex. Contacts the 5S rRNA and the P site tRNA. Forms a bridge to the 30S subunit in the 70S ribosome.

This is one of the proteins that bind and probably mediate the attachment of the 5S RNA into the large ribosomal subunit, where it forms part of the central protuberance. In the 70S ribosome it contacts protein S13 of the 30S subunit (bridge B1b), connecting the 2 subunits; this bridge is implicated in subunit movement. Contacts the P site tRNA; the 5S rRNA and some of its associated proteins might help stabilize positioning of ribosome-bound tRNAs. The protein is Large ribosomal subunit protein uL5 of Chlamydia trachomatis serovar A (strain ATCC VR-571B / DSM 19440 / HAR-13).